Consider the following 147-residue polypeptide: Nucleoside diphosphate kinase (147 aa).

ATP is bound by residues lysine 9, phenylalanine 57, arginine 85, threonine 91, arginine 102, and asparagine 112. Histidine 115 functions as the Pros-phosphohistidine intermediate in the catalytic mechanism.

It belongs to the NDK family. In terms of assembly, homotetramer. Requires Mg(2+) as cofactor.

Its subcellular location is the cytoplasm. The catalysed reaction is a 2'-deoxyribonucleoside 5'-diphosphate + ATP = a 2'-deoxyribonucleoside 5'-triphosphate + ADP. It carries out the reaction a ribonucleoside 5'-diphosphate + ATP = a ribonucleoside 5'-triphosphate + ADP. In terms of biological role, major role in the synthesis of nucleoside triphosphates other than ATP. The ATP gamma phosphate is transferred to the NDP beta phosphate via a ping-pong mechanism, using a phosphorylated active-site intermediate. This is Nucleoside diphosphate kinase from Listeria monocytogenes serotype 4a (strain HCC23).